Here is a 436-residue protein sequence, read N- to C-terminus: Methylenetetrahydrofolate--tRNA-(uracil-5-)-methyltransferase TrmFO (436 aa).

8 to 13 (GGGLAG) is an FAD binding site.

The protein belongs to the MnmG family. TrmFO subfamily. FAD is required as a cofactor.

The protein localises to the cytoplasm. It catalyses the reaction uridine(54) in tRNA + (6R)-5,10-methylene-5,6,7,8-tetrahydrofolate + NADH + H(+) = 5-methyluridine(54) in tRNA + (6S)-5,6,7,8-tetrahydrofolate + NAD(+). The enzyme catalyses uridine(54) in tRNA + (6R)-5,10-methylene-5,6,7,8-tetrahydrofolate + NADPH + H(+) = 5-methyluridine(54) in tRNA + (6S)-5,6,7,8-tetrahydrofolate + NADP(+). Catalyzes the folate-dependent formation of 5-methyl-uridine at position 54 (M-5-U54) in all tRNAs. In Syntrophomonas wolfei subsp. wolfei (strain DSM 2245B / Goettingen), this protein is Methylenetetrahydrofolate--tRNA-(uracil-5-)-methyltransferase TrmFO.